Consider the following 543-residue polypeptide: Probable protein kinase UbiB (543 aa).

A Protein kinase domain is found at 123–501 (DFDIVPLASA…KRQQAKGQFL (379 aa)). ATP contacts are provided by residues 129–137 (LASASIAQV) and Lys-152. Catalysis depends on Asp-287, which acts as the Proton acceptor. The helical transmembrane segment at 517–539 (TSNITALASISAATGVTFWLLSW) threads the bilayer.

The protein belongs to the ABC1 family. UbiB subfamily.

It is found in the cell inner membrane. It participates in cofactor biosynthesis; ubiquinone biosynthesis [regulation]. Functionally, is probably a protein kinase regulator of UbiI activity which is involved in aerobic coenzyme Q (ubiquinone) biosynthesis. This is Probable protein kinase UbiB from Aliivibrio salmonicida (strain LFI1238) (Vibrio salmonicida (strain LFI1238)).